Here is a 265-residue protein sequence, read N- to C-terminus: Membrane steroid-binding protein 2 (265 aa).

Residues 63–85 (WAAARSASPVAVIAAVAGAAVVY) form a helical membrane-spanning segment. The segment at 94–116 (PPPPPARPREEPSEEAPPPPEPV) is disordered. The region spanning 118 to 217 (VGEITAEELL…SKYVKVGTIK (100 aa)) is the Cytochrome b5 heme-binding domain. The tract at residues 120-217 (EITAEELLQY…SKYVKVGTIK (98 aa)) is steroid-binding.

This sequence belongs to the cytochrome b5 family. MAPR subfamily.

The protein localises to the cell membrane. In terms of biological role, binds multiple steroid compounds. The chain is Membrane steroid-binding protein 2 from Oryza sativa subsp. japonica (Rice).